Consider the following 77-residue polypeptide: Large ribosomal subunit protein eL13 (77 aa).

It belongs to the eukaryotic ribosomal protein eL13 family.

This Sulfurisphaera tokodaii (strain DSM 16993 / JCM 10545 / NBRC 100140 / 7) (Sulfolobus tokodaii) protein is Large ribosomal subunit protein eL13.